Here is a 149-residue protein sequence, read N- to C-terminus: Large ribosomal subunit protein bL9 (149 aa).

This sequence belongs to the bacterial ribosomal protein bL9 family.

Its function is as follows. Binds to the 23S rRNA. In Haemophilus ducreyi (strain 35000HP / ATCC 700724), this protein is Large ribosomal subunit protein bL9.